The following is an 88-amino-acid chain: Large ribosomal subunit protein bL31B (88 aa).

This sequence belongs to the bacterial ribosomal protein bL31 family. Type B subfamily. Part of the 50S ribosomal subunit.

The polypeptide is Large ribosomal subunit protein bL31B (Corynebacterium glutamicum (strain R)).